The sequence spans 105 residues: Chloroacetanilide N-alkylformylase 1, ferredoxin component (105 aa).

Residues 2-105 (PTIIVTTRDG…GLRVAIAPED (104 aa)) form the 2Fe-2S ferredoxin-type domain. Positions 40, 46, 49, and 86 each coordinate [2Fe-2S] cluster.

It belongs to the adrenodoxin/putidaredoxin family. In terms of assembly, the chloroacetanilide N-alkylformylase multicomponent enzyme system is composed of an oxygenase component (CndA) and an electron transfer component formed by a ferredoxin reductase (CndC1) and a ferredoxin (CndB1). In vitro, chloroacetanilide N-alkylformylase assays in which CndB1 is substituted for CndB2 demonstrate that the two enzymes possess nearly identical activities. It depends on [2Fe-2S] cluster as a cofactor.

Its function is as follows. Component of the chloroacetanilide N-alkylformylase multicomponent enzyme system involved in the degradation of chloroacetanilide herbicides (N-alkoxyalkyl-N-chloroacetyl-substituted aniline derivatives). In vitro, functions as an intermediate electron transfer protein. The protein is Chloroacetanilide N-alkylformylase 1, ferredoxin component of Rhizorhabdus wittichii (strain DC-6 / KACC 16600) (Sphingomonas wittichii).